Consider the following 231-residue polypeptide: Orotidine 5'-phosphate decarboxylase (231 aa).

Residues Asp11, Lys33, 60 to 69, Thr120, Arg181, Gln190, Gly210, and Arg211 contribute to the substrate site; that span reads DLKFHDIPNT. The active-site Proton donor is the Lys62.

This sequence belongs to the OMP decarboxylase family. Type 1 subfamily. As to quaternary structure, homodimer.

It carries out the reaction orotidine 5'-phosphate + H(+) = UMP + CO2. It participates in pyrimidine metabolism; UMP biosynthesis via de novo pathway; UMP from orotate: step 2/2. Its function is as follows. Catalyzes the decarboxylation of orotidine 5'-monophosphate (OMP) to uridine 5'-monophosphate (UMP). The chain is Orotidine 5'-phosphate decarboxylase from Pseudoalteromonas atlantica (strain T6c / ATCC BAA-1087).